We begin with the raw amino-acid sequence, 141 residues long: ATP synthase epsilon chain (141 aa).

Belongs to the ATPase epsilon chain family. F-type ATPases have 2 components, CF(1) - the catalytic core - and CF(0) - the membrane proton channel. CF(1) has five subunits: alpha(3), beta(3), gamma(1), delta(1), epsilon(1). CF(0) has three main subunits: a, b and c.

Its subcellular location is the cell membrane. In terms of biological role, produces ATP from ADP in the presence of a proton gradient across the membrane. The chain is ATP synthase epsilon chain from Lactococcus lactis subsp. cremoris (strain SK11).